The primary structure comprises 376 residues: Branched-chain-amino-acid aminotransferase, cytosolic (376 aa).

The residue at position 202 (Lys-202) is an N6-(pyridoxal phosphate)lysine.

The protein belongs to the class-IV pyridoxal-phosphate-dependent aminotransferase family. It depends on pyridoxal 5'-phosphate as a cofactor.

The protein localises to the cytoplasm. The catalysed reaction is L-leucine + 2-oxoglutarate = 4-methyl-2-oxopentanoate + L-glutamate. The enzyme catalyses L-isoleucine + 2-oxoglutarate = (S)-3-methyl-2-oxopentanoate + L-glutamate. It carries out the reaction L-valine + 2-oxoglutarate = 3-methyl-2-oxobutanoate + L-glutamate. It catalyses the reaction a 2-oxocarboxylate + L-methionine = 4-methylsulfanyl-2-oxobutanoate + an L-alpha-amino acid. It participates in amino-acid biosynthesis; L-isoleucine biosynthesis; L-isoleucine from 2-oxobutanoate: step 4/4. Its pathway is amino-acid biosynthesis; L-leucine biosynthesis; L-leucine from 3-methyl-2-oxobutanoate: step 4/4. It functions in the pathway amino-acid biosynthesis; L-valine biosynthesis; L-valine from pyruvate: step 4/4. The protein operates within amino-acid biosynthesis; L-methionine biosynthesis via salvage pathway; L-methionine from S-methyl-5-thio-alpha-D-ribose 1-phosphate: step 6/6. In terms of biological role, cytoplasmic isozyme of branched-chain-amino-acid aminotransferase, which catalyzes the first reaction in the catabolism of the essential branched chain amino acids (BCAAs) leucine, isoleucine, and valine. Catalyzes the formation of methionine from 2-keto-4-methylthiobutyrate (KMTB) in the methionine salvage pathway primarily using BCAAs (leucine, isoleucine, and valine) as well as lysine and proline as the amino donors. Involved in cell cycle regulation. The protein is Branched-chain-amino-acid aminotransferase, cytosolic of Saccharomyces cerevisiae (strain ATCC 204508 / S288c) (Baker's yeast).